The following is a 351-amino-acid chain: N-formyl peptide receptor 2 (351 aa).

Residues 1 to 27 are Extracellular-facing; sequence METNFSTPLNEYEEVSYESAGYTVLRI. N-linked (GlcNAc...) asparagine glycosylation is present at N4. The helical transmembrane segment at 28–50 threads the bilayer; it reads LPLVVLGVTFVLGVLGNGLVIWV. Residues 51-61 are Cytoplasmic-facing; sequence AGFRMTRTVTT. The chain crosses the membrane as a helical span at residues 62–83; the sequence is ICYLNLALADFSFTATLPFLIV. The Extracellular segment spans residues 84 to 100; it reads SMAMGEKWPFGWFLCKL. A disulfide bond links C98 and C176. A helical membrane pass occupies residues 101–121; it reads IHIVVDINLFGSVFLIGFIAL. Residues 122-140 are Cytoplasmic-facing; it reads DRCICVLHPVWAQNHRTVS. A helical membrane pass occupies residues 141–162; that stretch reads LAMKVIVGPWILALVLTLPVFL. At 163–205 the chain is on the extracellular side; that stretch reads FLTTVTIPNGDTYCTFNFASWGGTPEERLKVAITMLTARGIIR. Residues 206 to 226 traverse the membrane as a helical segment; sequence FVIGFSLPMSIVAICYGLIAA. At 227–242 the chain is on the cytoplasmic side; sequence KIHKKGMIKSSRPLRV. The chain crosses the membrane as a helical span at residues 243–266; sequence LTAVVASFFICWFPFQLVALLGTV. Topologically, residues 267–286 are extracellular; the sequence is WLKEMLFYGKYKIIDILVNP. Residues 287-306 form a helical membrane-spanning segment; sequence TSSLAFFNSCLNPMLYVFVG. At 307–351 the chain is on the cytoplasmic side; it reads QDFRERLIHSLPTSLERALSEDSAPTNDTAANSASPPAETELQAM. The segment at 325 to 351 is disordered; that stretch reads LSEDSAPTNDTAANSASPPAETELQAM. Over residues 329–341 the composition is skewed to polar residues; the sequence is SAPTNDTAANSAS.

It belongs to the G-protein coupled receptor 1 family. In terms of assembly, interacts with Amyloid-beta protein 42, product of APP; the interaction takes place at the cell surface and the complex is then rapidly internalized. As to quaternary structure, (Microbial infection) Interacts with Staphylococcus aureus protein SSL13; this interaction leads to the activation of neutrophils. As to expression, detected in lung, bone marrow, neutrophils, spleen and testis.

The protein localises to the cell membrane. Low affinity receptor for N-formyl-methionyl peptides, which are powerful neutrophil chemotactic factors. Binding of FMLP to the receptor causes activation of neutrophils. This response is mediated via a G-protein that activates a phosphatidylinositol-calcium second messenger system. The activation of LXA4R could result in an anti-inflammatory outcome counteracting the actions of pro-inflammatory signals such as LTB4 (leukotriene B4). Receptor for the chemokine-like protein FAM19A5, mediating FAM19A5-stimulated macrophage chemotaxis and the inhibitory effect on TNFSF11/RANKL-induced osteoclast differentiation. Acts as a receptor for humanin. In Homo sapiens (Human), this protein is N-formyl peptide receptor 2 (FPR2).